The primary structure comprises 307 residues: Glutaminase (307 aa).

Substrate is bound by residues Ser-66, Asn-117, Glu-161, Asn-168, Tyr-192, Tyr-243, and Val-261.

The protein belongs to the glutaminase family. As to quaternary structure, homotetramer.

It catalyses the reaction L-glutamine + H2O = L-glutamate + NH4(+). This Serratia proteamaculans (strain 568) protein is Glutaminase.